The chain runs to 255 residues: Small ribosomal subunit protein eS1 (255 aa).

The span at 1–18 (MAVGKNKRLSKGKKGLKK) shows a compositional bias: basic residues. The tract at residues 1 to 20 (MAVGKNKRLSKGKKGLKKRV) is disordered. At Ala-2 the chain carries N-acetylalanine; partial.

The protein belongs to the eukaryotic ribosomal protein eS1 family. As to quaternary structure, component of the small ribosomal subunit. Mature ribosomes consist of a small (40S) and a large (60S) subunit. The 40S subunit contains about 33 different proteins and 1 molecule of RNA (18S). The 60S subunit contains about 49 different proteins and 3 molecules of RNA (25S, 5.8S and 5S).

The protein resides in the cytoplasm. The chain is Small ribosomal subunit protein eS1 from Coccidioides immitis (strain RS) (Valley fever fungus).